Consider the following 180-residue polypeptide: Shikimate kinase (180 aa).

Residue 14-19 (GAGKSS) participates in ATP binding. Residue S18 participates in Mg(2+) binding. Residues D36, R60, and G82 each contribute to the substrate site. R120 lines the ATP pocket. R139 is a substrate binding site.

This sequence belongs to the shikimate kinase family. In terms of assembly, monomer. Mg(2+) serves as cofactor.

The protein resides in the cytoplasm. It catalyses the reaction shikimate + ATP = 3-phosphoshikimate + ADP + H(+). Its pathway is metabolic intermediate biosynthesis; chorismate biosynthesis; chorismate from D-erythrose 4-phosphate and phosphoenolpyruvate: step 5/7. Functionally, catalyzes the specific phosphorylation of the 3-hydroxyl group of shikimic acid using ATP as a cosubstrate. This is Shikimate kinase from Xylella fastidiosa (strain 9a5c).